The primary structure comprises 421 residues: UDP-N-acetylglucosamine 1-carboxyvinyltransferase (421 aa).

22–23 (KN) provides a ligand contact to phosphoenolpyruvate. Arg-93 is a UDP-N-acetyl-alpha-D-glucosamine binding site. The Proton donor role is filled by Cys-117. A 2-(S-cysteinyl)pyruvic acid O-phosphothioketal modification is found at Cys-117. UDP-N-acetyl-alpha-D-glucosamine contacts are provided by residues 122-126 (RPVDL), Asp-308, and Leu-330.

It belongs to the EPSP synthase family. MurA subfamily.

The protein resides in the cytoplasm. It catalyses the reaction phosphoenolpyruvate + UDP-N-acetyl-alpha-D-glucosamine = UDP-N-acetyl-3-O-(1-carboxyvinyl)-alpha-D-glucosamine + phosphate. It participates in cell wall biogenesis; peptidoglycan biosynthesis. Its function is as follows. Cell wall formation. Adds enolpyruvyl to UDP-N-acetylglucosamine. This Helicobacter hepaticus (strain ATCC 51449 / 3B1) protein is UDP-N-acetylglucosamine 1-carboxyvinyltransferase.